The chain runs to 285 residues: MRLIIVSGRSGSGKSTALDVLEDNGYYCIDNLPAGLLPELAERALIHTELAQPLVAVSIDARNLPSHLSRFPELLEDVRAKHIQCDVLYLDADEETLLKRFSETRRRHPLSNANRSLAEAIQDESALLGPIADLADLKINTTHLNLYQLRDTIKLRLLNQPEPGTAFLVESFGFKRGMPVDADLVFDVRCLPNPYWKPELRAQSGLDQPVAEYLAAQPEVEEMYQDIYTYLYKWLPRFAASNRAYVTIAIGCTGGHHRSVYLTERLGQALQKTLKNVQVRHRDLS.

G8 to S15 is an ATP binding site. D60 to N63 provides a ligand contact to GTP.

This sequence belongs to the RapZ-like family.

Functionally, displays ATPase and GTPase activities. The protein is Nucleotide-binding protein Pfl01_0854 of Pseudomonas fluorescens (strain Pf0-1).